Reading from the N-terminus, the 360-residue chain is Protein RecA (360 aa).

An ATP-binding site is contributed by 66-73; that stretch reads GPESSGKT. The tract at residues 330 to 360 is disordered; it reads DAKAIEERENPEKVKQDKEVPVNKDASDEKK.

It belongs to the RecA family.

It is found in the cytoplasm. In terms of biological role, can catalyze the hydrolysis of ATP in the presence of single-stranded DNA, the ATP-dependent uptake of single-stranded DNA by duplex DNA, and the ATP-dependent hybridization of homologous single-stranded DNAs. It interacts with LexA causing its activation and leading to its autocatalytic cleavage. The sequence is that of Protein RecA from Lactobacillus johnsonii (strain CNCM I-12250 / La1 / NCC 533).